Consider the following 452-residue polypeptide: Packaging protein 1 (452 aa).

Positions 1-78 are disordered; sequence MLPCRSTGRR…AKPPQRGSLL (78 aa). Position 173-180 (173-180) interacts with ATP; that stretch reads GPTGCGKS. Residues 442 to 452 form a DNA-binding region; it reads RAYHVRKNKYQ.

It belongs to the adenoviridae packaging protein 1 family. Homodimer. Part of a genome packaging complex composed of packaging proteins 1, 2 and 3; this complex specifically binds to the packaging sequence on the left end of viral genomic DNA and performs packaging of the viral genome. Interacts with protein 33K.

It localises to the virion. It is found in the host nucleus. Its subcellular location is the host nucleoplasm. The protein localises to the host nucleolus. Its function is as follows. Component of the packaging machinery which encapsidates the viral DNA into preformed capsids and transcriptional activator of the viral major late promoter (MLP). Binds, along with packaging proteins 2 and 3, to the specific packaging sequence on the left end of viral genomic DNA and displays ATPase activity thereby providing the power stroke of the packaging machinery. The activity of packaging protein IVa2 is stimulated by protein 33K which acts as a terminase. May be the protein that pumps DNA into the capsid powered by ATP hydrolysis. Specifically binds to the 5'-CG-3' nucleotides of the repeats making up the packaging sequence. Component of the DEF-A and DEF-B transcription factors that bind downstream elements of the major late promoter (MLP), and stimulate transcription from the MLP after initiation of viral DNA replication. DEF-A is a heterodimer packaging proteins 1 and 2 and DEF-B is a homodimer of packaging protein 1. This Homo sapiens (Human) protein is Packaging protein 1.